Here is a 289-residue protein sequence, read N- to C-terminus: Bifunctional protein FolD (289 aa).

NADP(+) is bound by residues 165–167 (GAS) and Ser-190.

The protein belongs to the tetrahydrofolate dehydrogenase/cyclohydrolase family. As to quaternary structure, homodimer.

The enzyme catalyses (6R)-5,10-methylene-5,6,7,8-tetrahydrofolate + NADP(+) = (6R)-5,10-methenyltetrahydrofolate + NADPH. It carries out the reaction (6R)-5,10-methenyltetrahydrofolate + H2O = (6R)-10-formyltetrahydrofolate + H(+). It participates in one-carbon metabolism; tetrahydrofolate interconversion. Catalyzes the oxidation of 5,10-methylenetetrahydrofolate to 5,10-methenyltetrahydrofolate and then the hydrolysis of 5,10-methenyltetrahydrofolate to 10-formyltetrahydrofolate. The chain is Bifunctional protein FolD from Ralstonia nicotianae (strain ATCC BAA-1114 / GMI1000) (Ralstonia solanacearum).